A 276-amino-acid chain; its full sequence is NAD kinase (276 aa).

Catalysis depends on Asp-61, which acts as the Proton acceptor. NAD(+) is bound by residues 61 to 62 (DG), 134 to 135 (ND), Arg-145, Lys-162, Asp-164, Val-172, 175 to 180 (TAYSFS), and Gln-234.

It belongs to the NAD kinase family. A divalent metal cation serves as cofactor.

Its subcellular location is the cytoplasm. It catalyses the reaction NAD(+) + ATP = ADP + NADP(+) + H(+). Functionally, involved in the regulation of the intracellular balance of NAD and NADP, and is a key enzyme in the biosynthesis of NADP. Catalyzes specifically the phosphorylation on 2'-hydroxyl of the adenosine moiety of NAD to yield NADP. The sequence is that of NAD kinase from Clostridium perfringens (strain 13 / Type A).